The primary structure comprises 126 residues: Small ribosomal subunit protein uS13 (126 aa).

Residues Gly-95–Lys-126 are disordered. Positions Ala-107–Lys-126 are enriched in basic residues.

The protein belongs to the universal ribosomal protein uS13 family. In terms of assembly, part of the 30S ribosomal subunit. Forms a loose heterodimer with protein S19. Forms two bridges to the 50S subunit in the 70S ribosome.

In terms of biological role, located at the top of the head of the 30S subunit, it contacts several helices of the 16S rRNA. In the 70S ribosome it contacts the 23S rRNA (bridge B1a) and protein L5 of the 50S subunit (bridge B1b), connecting the 2 subunits; these bridges are implicated in subunit movement. Contacts the tRNAs in the A and P-sites. The polypeptide is Small ribosomal subunit protein uS13 (Aquifex aeolicus (strain VF5)).